Consider the following 67-residue polypeptide: Large ribosomal subunit protein bL32 (67 aa).

A compositionally biased stretch (basic residues) spans 1–19; the sequence is MAVPKRKMSRSNTRARRSQ. Residues 1–21 form a disordered region; that stretch reads MAVPKRKMSRSNTRARRSQWK.

It belongs to the bacterial ribosomal protein bL32 family.

This chain is Large ribosomal subunit protein bL32, found in Clavibacter michiganensis subsp. michiganensis (strain NCPPB 382).